Here is a 247-residue protein sequence, read N- to C-terminus: Suppressor of silencing P0 (247 aa).

The F-box-like domain occupies 76–95; it reads LPRHLHYECLEWGLLCGTHP.

Belongs to the polerovirus P0 protein family.

Functionally, suppressor of RNA-mediated gene silencing, also known as post-transcriptional gene silencing (PTGS), a mechanism of plant viral defense that limits the accumulation of viral RNAs. The P0 protein suppresses local PTGS using its F-box-like domain to mediate destabilization and degradation of the AGO1 protein, although not via an interaction with host SKP1A. Participates, together with the proteins P1 and P7, in the inhibition of the induction of aphid-induced host phytohormones. This could play a role in the attraction to the infected plants by aphids. This is Suppressor of silencing P0 from Potato leafroll virus (strain Potato/Netherlands/Wageningen/1989) (PLrV).